Consider the following 285-residue polypeptide: Probable endonuclease 4 (285 aa).

Zn(2+) is bound by residues histidine 69, histidine 109, glutamate 145, aspartate 179, histidine 182, histidine 216, aspartate 229, histidine 231, and glutamate 261.

It belongs to the AP endonuclease 2 family. Zn(2+) serves as cofactor.

It catalyses the reaction Endonucleolytic cleavage to 5'-phosphooligonucleotide end-products.. Functionally, endonuclease IV plays a role in DNA repair. It cleaves phosphodiester bonds at apurinic or apyrimidinic (AP) sites, generating a 3'-hydroxyl group and a 5'-terminal sugar phosphate. The protein is Probable endonuclease 4 of Salmonella dublin (strain CT_02021853).